We begin with the raw amino-acid sequence, 479 residues long: 3-isopropylmalate dehydratase large subunit (479 aa).

Residues Cys-353, Cys-414, and Cys-417 each coordinate [4Fe-4S] cluster.

Belongs to the aconitase/IPM isomerase family. LeuC type 1 subfamily. Heterodimer of LeuC and LeuD. It depends on [4Fe-4S] cluster as a cofactor.

The enzyme catalyses (2R,3S)-3-isopropylmalate = (2S)-2-isopropylmalate. Its pathway is amino-acid biosynthesis; L-leucine biosynthesis; L-leucine from 3-methyl-2-oxobutanoate: step 2/4. Its function is as follows. Catalyzes the isomerization between 2-isopropylmalate and 3-isopropylmalate, via the formation of 2-isopropylmaleate. The sequence is that of 3-isopropylmalate dehydratase large subunit from Xanthomonas campestris pv. campestris (strain 8004).